We begin with the raw amino-acid sequence, 2327 residues long: MNTLLWTILLPLLFSFCVCQQPEHQDLEMSVQYYDDNVIDLLEALNVTRSVKGVTKAKGSDPASPAWKFRQRVPHLTLPRDYSVYLLSTTQESLGLHFVAKQAKNNRGTLVAFLSPAATKIDGRPLLRLISDTHTDQLYFEYRTAQTMEPASLHFPGSSPFSGSQWARVALNVNTHKVTLFLDCEEPVVFGKEGAEEMLSLILPLDLEITFASTPSDKESKFLGYWQTAEISPTGFTRRPWHCENRSDSLPLPYSLSGERQMEDEEIQREPRAPDLSDTDHYQQQQSEVPAQLLAKDDRLQRLEEAVKGLTNMIDMIKSQNADLQARVIALESCECRRSTCVWEDKEYQDSETWKKDACNICVCVGGSVTCSVRKDWPQCLGCFHEGRNYNNKDIFSVGPCMSCICQSGEVSCTPKLCPPVTCSDPVTLPNECCPLCATGCSDGHKEGDTWRKDTCTTCTCQNGTISCEREQCPELTCLKRHTPPGQCCAKCQQGCEYEGLIYRNGDYFLSQSNPCVNCSCLNNLVRCLPVQCPLPACTNPVPIPGQCCPSCPVCELDGHPLIPGQNVTTKDGCRLCSCQDGKVQCTESVQCPHICTHGVRSNSCCLDCSACEMHGDIIPNGLTFQGNMDPCESCTCQDGNVHCVRVSCPELSCVLHEKIPGECCSQCQSCMDGTVKRKHGEEWKPQGDPCQSCRCLEGRVQCRKRHCAALCRNPLPPRPGTCCPMCDGCLYNGRSYLNGQPVRSTDQCNRCFCENGNVQCEPIACPQAPCRNPVRRTGECCPRCEGCEYDSRHFAEGVVFTTAHDPCLQCTCLSGEVSCEHLDRKCPPSQCSHPGKAAGQCCPSCDVCDFEGILYTDRQTFQPPGHGPCLKCFCTIGNVRCVEETCPPAPCPNPVRDPEQCCPVCKVCVQDGVEFLEGIEWELDGNPCSSCTCRNGDTVCGVSECPPVSCLHPTRREGECCPVCDSCSYNQRLYSNEQIFTDPDNPCQDCQCKDGTVQCSSIVCPPVLCTIPERTPGQCCAKCPDCRYQDQIFLEGEQFSNPLNQCQECWCRDGHVTCTDRGCTGALCSYPLPGTCCQNNCNGCNYAGKEYPNGADFPHPTDKCRQCHCINGNVQCLAQRCPPLLCAEPFPVPGECCPQCPVPPADCPYSGVTYRHMQRFYDPSDKCRDCICNNGTVTCQRKPCAPTPCLHPLQGDCCRSCDGCLMSGKELANGEQFPQPSDPCSVCVCWEGSVTCQPKTCPVLNCPFPAPGQCCKECQDCQYFGEVYLNGQEFSAPEDSCSRCVCADGFVTCSKKPCYKAGCTHPSTPPGKCCPVCDGCSYNGDALINSQSVPDPSNPLCSECTCRAGSVQCVRKLCGPTSCPHPVTGPCDCPICQGCHFQGHNYIDGEVFTSAQSQCEQCRCMRGHVTCGPRPCDQVTCPHPAEDPCMCPVCDGCNYSGRDCTNGESFPDPEDECSHCTCRNGEVACISVPCPRVSCMYPITPRGECCPRCTGICKHNGRVYQSGDTFHPPGDLCTKCSCQNEMVNCQRVRCSQECSHPVLSPASSCCPVCDRCFYENREYANHETFTSTSDPCQRCVCLDGSVTCTHVVCPYVSCANPITKPGQCCRECPVCRYQGKEFSEGAHWVPHTDPCLKCTCSNGHVDCEPPQCPPLPCTQQVTDPGTCCPRCRGCVYNGREYRDNSNWLSSSDHCMSCMCVDGVTTCSKLQCITSCTNQITIPGECCPVCADCISNSKVYLPGDSYNPSKDPCEICTCESLPNGQQYRHCTKKQCPSLLDCPRSYILPPAEGQCCSSCAQALSNCTNTLVGNEIQATDDPCYTCHCKDLTWVCVHQPCPALSCPRSEQFTHSGSCCPVCNECVVEIEGRRVPDGETWTDRQDPCVTCTCTLGHVECQIEECQPVQCQEGERKVKRPGTCCHECQASAVSCWYQGQRFLSNEHWQVDECTACTCVSGEVHCHSERCPQVSCTAEETPALIPGMCCPHCIPRPATCIAFGDPHYRTFDGKMYHFQGSCTYVLSEDCEGGDFSIHVTNDDRGLRGVSWTKEVTVLIGDAVVQLLQDWVVMVDYQTVELPFLKEPYIYIERKTNTILLNSNIGVKVQWNGRSHLEVSVPGTYRDHLCGLCGNFNNYPQDDLRDRRGQILMSEAAFGNSWRVQSSNDSSSSCWDGQDVDPCKQAGYRARKEANGRCKLLKSSVFEPCHRVVPPEMFFASCVYDLCACGAGDECLCDVLEAYASECREAGVILQWRSPALCAVGCPHDRGYVFDECGPPCPKTCFNKDVPLGVLESHCFKPCVPGCQCPAGLVEHESHCIPPESCPKIIHGNL.

Residues 1–19 form the signal peptide; the sequence is MNTLLWTILLPLLFSFCVC. Residues 250-294 form a disordered region; the sequence is LPLPYSLSGERQMEDEEIQREPRAPDLSDTDHYQQQQSEVPAQLL. Basic and acidic residues predominate over residues 268-281; the sequence is QREPRAPDLSDTDH. Residues 291–332 adopt a coiled-coil conformation; the sequence is AQLLAKDDRLQRLEEAVKGLTNMIDMIKSQNADLQARVIALE. VWFC domains lie at 339 to 400, 401 to 438, 439 to 493, 494 to 553, 554 to 610, 611 to 669, 670 to 728, 729 to 786, 787 to 847, 848 to 907, 908 to 966, 967 to 1025, 1026 to 1083, 1084 to 1142, 1146 to 1203, 1204 to 1260, 1261 to 1319, 1321 to 1377, 1378 to 1439, 1440 to 1495, 1496 to 1555, 1556 to 1614, 1615 to 1673, 1674 to 1731, 1732 to 1799, 1800 to 1860, 1861 to 1924, and 1928 to 1988; these read STCV…SVGP, CMSCICQSGEVSCTPKLCPPVTCSDPVTLPNECCPLCA, TGCS…AKCQ, QGCE…PSCP, VCEL…LDCS, ACEM…SQCQ, SCMD…PMCD, GCLY…PRCE, GCEY…PSCD, VCDF…PVCK, VCVQ…PVCD, SCSY…AKCP, DCRY…NNCN, GCNY…PQCP, ADCP…RSCD, GCLM…KECQ, DCQY…PVCD, CSYN…CPIC, QGCH…DGCN, YSGR…PRCT, GICK…PVCD, RCFY…RECP, VCRY…PRCR, GCVY…PVCA, DCIS…SSCA, QALS…PVCN, ECVV…HECQ, and VSCW…PHCI. Residues 1992–2168 form the VWFD domain; that stretch reads ATCIAFGDPH…SSNDSSSSCW (177 aa). 2 cysteine pairs are disulfide-bonded: Cys1994–Cys2126 and Cys2016–Cys2167. The region spanning 2259-2319 is the TIL domain; sequence CPHDRGYVFD…ESHCIPPESC (61 aa).

It localises to the secreted. Its function is as follows. May be a signaling molecule that mediates inductive activities of the embryonic midline. Able to dorsalize mesoderm. The chain is Kielin/chordin-like protein (kcp) from Xenopus laevis (African clawed frog).